A 292-amino-acid chain; its full sequence is Probable serine/threonine-protein kinase FPV226 (292 aa).

The Protein kinase domain occupies 14–292 (WKIDKLIGCG…DLLRQLVNSL (279 aa)). ATP contacts are provided by residues 20–28 (IGCGGFGCV) and K43. The active-site Proton acceptor is the D147.

Belongs to the protein kinase superfamily. Ser/Thr protein kinase family. Poxviruses subfamily.

The enzyme catalyses L-seryl-[protein] + ATP = O-phospho-L-seryl-[protein] + ADP + H(+). It catalyses the reaction L-threonyl-[protein] + ATP = O-phospho-L-threonyl-[protein] + ADP + H(+). The sequence is that of Probable serine/threonine-protein kinase FPV226 from Vertebrata (FPV).